The following is a 446-amino-acid chain: 23S rRNA (uracil(1939)-C(5))-methyltransferase RlmD (446 aa).

The TRAM domain maps to 6–64 (KKLPQESITCEIESLSHEGRGVSHKDGKTLFVEGALPGETVTARYVNSRRSYDELAVEE). 4 residues coordinate [4Fe-4S] cluster: Cys77, Cys83, Cys86, and Cys165. S-adenosyl-L-methionine contacts are provided by Gln275, Phe304, Asn309, Glu325, Asp352, and Asp377. Cys403 serves as the catalytic Nucleophile.

The protein belongs to the class I-like SAM-binding methyltransferase superfamily. RNA M5U methyltransferase family. RlmD subfamily.

The enzyme catalyses uridine(1939) in 23S rRNA + S-adenosyl-L-methionine = 5-methyluridine(1939) in 23S rRNA + S-adenosyl-L-homocysteine + H(+). Functionally, catalyzes the formation of 5-methyl-uridine at position 1939 (m5U1939) in 23S rRNA. This Hahella chejuensis (strain KCTC 2396) protein is 23S rRNA (uracil(1939)-C(5))-methyltransferase RlmD.